A 201-amino-acid chain; its full sequence is Recombination protein RecR (201 aa).

The C4-type zinc-finger motif lies at Cys57–Cys72. The 97-residue stretch at Thr80–Pro176 folds into the Toprim domain.

The protein belongs to the RecR family.

In terms of biological role, may play a role in DNA repair. It seems to be involved in an RecBC-independent recombinational process of DNA repair. It may act with RecF and RecO. This Ureaplasma parvum serovar 3 (strain ATCC 27815 / 27 / NCTC 11736) protein is Recombination protein RecR.